Consider the following 31-residue polypeptide: U1-theraphotoxin-Cv1a (31 aa).

Disulfide bonds link Cys2–Cys16, Cys9–Cys21, and Cys15–Cys28.

In terms of tissue distribution, expressed by the venom gland.

It localises to the secreted. Insecticidal toxin that induces reversible paralysis in crickets but not in cockroaches and mice. Molecular target unknown. This chain is U1-theraphotoxin-Cv1a, found in Coremiocnemis valida (Singapore tarantula).